The chain runs to 347 residues: uncharacterized protein (347 aa).

A run of 10 helical transmembrane segments spans residues 6 to 26, 37 to 57, 90 to 110, 114 to 134, 140 to 160, 182 to 202, 217 to 237, 262 to 282, 289 to 309, and 317 to 337; these read GSASQLAFVYVGTVVGAGFAT, FGWFGFFGILVSGGMFTLLGA, FMLFVLLGVTSVMLSGAGALF, LGMSAQIGMLITIGLSLIVMT, IFGVNVFVVPLLIIFSMIVVA, WLLSAVSYGALNLSLAQAVLV, GALIGGTMLTIVLSASFLSLS, LIYLLIIFGEVFTSVIGNLYG, SFLPVKSKYIFAAIMITAYIT, and LISTIYPLFGYVSLAFIGALL.

Its subcellular location is the cell membrane. This is an uncharacterized protein from Bacillus subtilis (strain 168).